The chain runs to 1427 residues: Coiled-coil domain-containing protein 144A (1427 aa).

A compositionally biased stretch (basic and acidic residues) spans 1–11 (MASWGGEKRGG). Disordered regions lie at residues 1–32 (MASW…VGSQ), 87–189 (AARS…LTER), 213–261 (LPEN…CDRE), 453–485 (NMNQ…DSDR), and 528–586 (EEEM…EVKN). Composition is skewed to polar residues over residues 129–150 (PESL…LSDE) and 167–178 (VSPSMPENQSAT). A compositionally biased stretch (acidic residues) spans 224–234 (QDSELTSEEEQ). Polar residues predominate over residues 453–467 (NMNQNSDSGSTNNYK). The stretch at 490-545 (YLHEELQQDMQKFKNEVNTLEEEFLALKKEDVQLHKDVEEEMEKHRSNSTELSGTL) forms a coiled coil. Basic and acidic residues predominate over residues 528 to 537 (EEEMEKHRSN). Over residues 543–552 (GTLTDGTTVG) the composition is skewed to low complexity. Positions 563-584 (PRKENGEHDRPADKTSNEKNEV) are enriched in basic and acidic residues. 2 coiled-coil regions span residues 648–1129 (LLKL…DLTE) and 1155–1309 (FSMK…TQLT).

This sequence belongs to the CCDC144 family.

May play a role in preventing the formation of kidney stones through inhibition of calcium oxalate monohydrate (COM) crystallization, attenuating COM-induced apoptotic injury to renal epithelial cells. May exhibit antilithiatic (preventing the formation of kidney stones) activity through crystal binding, hindering the crystal attachment to renal epithelial cells, a pre-requisite to initiate inflammatory response. This is Coiled-coil domain-containing protein 144A (CCDC144A) from Homo sapiens (Human).